The primary structure comprises 152 residues: Erythema protein SVEP (152 aa).

An N-terminal signal peptide occupies residues 1 to 18; that stretch reads MSITQSFFVLTLAIFGAA.

In terms of tissue distribution, salivary gland (at protein level).

The protein localises to the secreted. Salivary vasoactive peptide; induces vasodilatation in bioassay with rabbit aortic rings. The sequence is that of Erythema protein SVEP from Simulium vittatum (Striped black fly).